We begin with the raw amino-acid sequence, 567 residues long: Cytochrome P450 monooxygenase 231 (567 aa).

The helical transmembrane segment at 3-23 (VSTNELAILAIVLLATGVLFY) threads the bilayer. Asn81 and Asn223 each carry an N-linked (GlcNAc...) asparagine glycan. Position 475 (Cys475) interacts with heme.

The protein belongs to the cytochrome P450 family. Heme serves as cofactor.

Its subcellular location is the membrane. It participates in secondary metabolite biosynthesis. Functionally, cytochrome P450 monooxygenase that is able to use anthracene, carbazole, pyrene, and phenanthrene as substrates for oxidation. These multifunctional properties against a series of polycyclic aromatic hydrocarbons (PAHs) suggest that CYP231 would play important roles, at least in part, in fungal metabolic systems involved in xenobiotic detoxification. In Postia placenta (strain ATCC 44394 / Madison 698-R) (Brown rot fungus), this protein is Cytochrome P450 monooxygenase 231.